Here is a 933-residue protein sequence, read N- to C-terminus: 2-oxoglutarate dehydrogenase E1 component (933 aa).

This sequence belongs to the alpha-ketoglutarate dehydrogenase family. In terms of assembly, homodimer. Part of the 2-oxoglutarate dehydrogenase (OGDH) complex composed of E1 (2-oxoglutarate dehydrogenase), E2 (dihydrolipoamide succinyltransferase) and E3 (dihydrolipoamide dehydrogenase); the complex contains multiple copies of the three enzymatic components (E1, E2 and E3). Requires thiamine diphosphate as cofactor.

It carries out the reaction N(6)-[(R)-lipoyl]-L-lysyl-[protein] + 2-oxoglutarate + H(+) = N(6)-[(R)-S(8)-succinyldihydrolipoyl]-L-lysyl-[protein] + CO2. E1 component of the 2-oxoglutarate dehydrogenase (OGDH) complex which catalyzes the decarboxylation of 2-oxoglutarate, the first step in the conversion of 2-oxoglutarate to succinyl-CoA and CO(2). This Staphylococcus saprophyticus subsp. saprophyticus (strain ATCC 15305 / DSM 20229 / NCIMB 8711 / NCTC 7292 / S-41) protein is 2-oxoglutarate dehydrogenase E1 component.